A 2344-amino-acid polypeptide reads, in one-letter code: MAAMSRLTGMTTAILPEKKPLNFFLDLRDKTPPCCIRATGKLAWPVFLGQNGKEGPLETCNKCGKWLNGFGCFGLEDLGDVCLCSIAQQKHKFGPVCLCNRAYIHDCGRWRRRSRFLKHYKALNKVIPCAYQFDESFSTPVFEGEVDDLFVELGAPTSMGFMDKKLLKKGKKLMDKFVDVDEPCLTSRDASLLDSIASDNTIRAKLEEEYGVEMVQAARDRKDFMKNLRLALDNRPANPVTWYTKLGNITEKGKQWAKKVVYGACKVTDPLKTLASILLVGLHNVIAVDTTVMLSTFKPVNLLAILMDWTNDLTGFVTTLVRLLELYGVVQATVNLIVEGVKSFWDKVVCATDRCFDLLKRLFDTFEDSVPTGPTAGCLIFMAFVFSTVVGYLPNNSVITTFMKGAGKLTTFAGVIGAIRTLWITINQHMVAKDLTSIQQKVMTVVKMANEAATLDQLEIVSCLCSDLENTLTNRCTLPSYNQHLGILNASQKVISDLHTMVLGKINMTKQRPQPVAVIFKGAPGIGKTYLVHRIARDLGCQHPSTINFGLDHFDSYTGEEVAIADEFNTCGDGESWVELFIQMVNTNPCPLNCDKAENKNKVFNSKYLLCTTNSNMILNATHPRAGAFYRRVMIVEARNKAVESWQATRHGSKPGRSCYSKDMSHLTFQVYPHNMPAPGFVFVGDKLVKSQVAPREYKYSELLDLIKSEHPDVASFEGANRFNFVYPDAQYDQALLMWKQYFVMYGCVARLAKNFVDDIPYNQVHISRASDPKIEGCVEYQCKFQHLWRMVPQFVLGCVNMTNQLGTPLTQQQLDRITNGVEGVTVTTVNNILPFHSQTTLINPSFIKLIWAVRKHLKGLSGVTKVAQFIWRVMTNPVDAYGSLVRTLTGAATFSDDPVSTTIICSNCTIQIHSCGGLLVRYSRDPVPVASDNVDRGDQGVDVFTDPNLISGFSWRQIAHLFVEVISHLCANHLVNLATMAALGAVATKAFQGVKGKTKRGRGARVNLGNDEYDEWQAARREFVNAHDMTAEEYLAMKNKAAMGSDDQDSVMFRSWWTRRQLRPDEDQVTVVGRGGVRNEVIRTRVRQTPKGPKTLDDGGFYDNDYEGLPGFMRHNGSGWMIHIGNGLYISNTHTARSSCSEVVTCSPTTDLCLVKGEAIRSVAQIAEGTPVCDWKKSPISTYGIKKTLSDSTKIDVLAYDGCTQTTHGDCGLPLYDSSGKIVAIHTGKLLGFSKMCTLIDLTITKGVYETSNFFCGEPIDYRGITAHRLVGAEPRPPVSGTRYAKVPGVPEEYKTGYRPANLGRSDPDSDKSLMNIAVKNLQVYQQEPKLDKVDEFIERAAADVLGYLRFLTKGERQANLNFKAAFNTLDLSTSCGPFVPGKKIDHVKDGVMDQVHAKHLYKCWSVANSGKALHHIYACGLKDELRPLDKVKEGKKRLLWGCDVGVAVCAAAVFHNICYKLKMVARFGPIAVGVDMTSRDVDVIINNLTSKASDFLCLDYSKWDSTMSPCVVRLAIDILADCCEQTELTKSVVLTLKSHPMTILDAMIVQTKRGLPSGMPFTSVINSICHWLLWSAAVYKSCAEIGLHCSNLYEDAPFYTYGDDGVYAMTPMMVSLLPAIIENLRDYGLSPTAADKTEFIDVCPLNKISFLKRTFELTDIGWVSKLDKSSILRQLEWSKTTSRHMMIEETYDLAKEERGVQLEELQVAAAAHGQEFFNFVCKELERQQAYTQFSVYSYDAARKILADRKRVVSVVPDDEFVNVMEGKARTAPQGEAAGTATTASVPGTTTDGMDPGVVATTSVVTAENSSASIATAGIGGPPQQVDQQETWRTNFYYNDVFTWSVADAPGSILYTVQHSPQNNPFTAVLSQMYAGWAGGMQFRFIVAGSGVFGGRLVAAVIPPGIEIGPGLEVRQFPHVVIDARSLEPVTITMPDLRPNMYHPTGDPGLVPTLVLSVYNNLINPFGGSTSAIQVTVETRPSEDFEFVMIRAPSSKTVDSISPAGLLTTPVLTGVGNDNRWNGQIVGLQPVPGGFSTCNRHWNLNGSTYGWSSPRFADIDHRRGSASYPGNNATNVLQFWYANAGSAIDNPISQVAPDGFPDMSFVPFNGPGIPAAGWVGFGAIWNSNSGAPNVTTVQAYELGFATGAPGNLQPTTNTSGSQTVAKSIYAVVTGTAQNPAGLFVMASGVISTPSANAITYTPQPDRIVTTPGTPAAAPVGKNTPIMFASVVRRTGDVNATAGSANGTQYGTGSQPLPVTIGLSLNNYSSALMPGQFFVWQLTFASGFMEIGLSVDGYFYAGTGASTTLIDLTELIDVRPVGPRPSKSTLVFNLGGTANGFSYV.

The SF3 helicase domain occupies Q492–S653. G522–T529 serves as a coordination point for ATP. Y1014 is modified (O-(5'-phospho-RNA)-tyrosine). Y1014 is subject to O-UMP-tyrosine; transient. The Peptidase C24 domain maps to G1109 to T1244. Active-site for 3CLpro activity residues include H1135, D1152, and C1212. In terms of domain architecture, RdRp catalytic spans S1495–L1619. C1584 and C1591 form a disulfide bridge. The interval R1771–D1796 is disordered. The segment covering A1778 to G1794 has biased composition (low complexity).

As to quaternary structure, homodimer. Homomultimer. Interacts with host type II histo-blood group structures antigens at the surface of target cells. The cofactor is Mn(2+). In terms of processing, specific enzymatic cleavages by its own cysteine protease yield mature proteins. The protease cleaves itself from the nascent polyprotein autocatalytically. Precursor p41 can be cleaved by viral 3CLpro into protein p19 and VPg, or cleaved by host protease into protein p23/2 and protein p18. VPg is uridylylated by the polymerase and is covalently attached to the 5'-end of the polyadenylated genomic and subgenomic RNAs. This uridylylated form acts as a nucleotide-peptide primer for the polymerase.

It localises to the host cytoplasm. Its subcellular location is the host endoplasmic reticulum. It is found in the virion. It carries out the reaction a ribonucleoside 5'-triphosphate + H2O = a ribonucleoside 5'-diphosphate + phosphate + H(+). The enzyme catalyses Endopeptidase with a preference for cleavage when the P1 position is occupied by Glu-|-Xaa and the P1' position is occupied by Gly-|-Yaa.. The catalysed reaction is RNA(n) + a ribonucleoside 5'-triphosphate = RNA(n+1) + diphosphate. Together with NTPase and NS4, initiates the formation of the replication complex. Induces the proliferation of the host smooth ER membranes forming long tubular structures. These remodeled membranes probably form the viral factories that contain the replication complex. Functionally, displays NTPase activity, but no helicase activity. Induces the formation of convoluted membranes derived from the host ER. These remodeled membranes probably form the viral factories that contain the replication complex. Together with NS2 and NS4, initiates the formation of the replication complex. In terms of biological role, probable key protein responsible for the formation of membrane alterations by the virus. Induces the formation of convoluted membranes derived from the host ER. These remodeled membranes probably form the viral factories that contain the replication complex. Together with NS2 and NTPase, initiates the formation of the replication complex. Its function is as follows. Viral genome-linked protein is covalently linked to the 5'-end of the positive-strand, negative-strand genomic RNAs and subgenomic RNA. Acts as a genome-linked replication primer. May recruit ribosome to viral RNA thereby promoting viral proteins translation. Interacts with host translation initiation complex to allow the translation of viral proteins. Processes the polyprotein. 3CLpro-RdRp is first released by autocleavage, then all other proteins are cleaved. May cleave polyadenylate-binding protein thereby inhibiting cellular translation. Functionally, replicates genomic and antigenomic RNA by recognizing replications specific signals. Also transcribes a subgenomic mRNA by initiating RNA synthesis internally on antigenomic RNA. This sgRNA codes for structural proteins. Catalyzes the covalent attachment VPg with viral RNAs. In terms of biological role, capsid protein VP60 self assembles to form an icosahedral capsid with a T=3 symmetry, about 35 nm in diameter, and consisting of 180 capsid proteins. A smaller form of capsid with a diameter of 23 nm might be capsid proteins assembled as icosahedron with T=1 symmetry. The capsid encapsulate VP2 proteins and genomic or subgenomic RNA. Attaches virion to target cells by binding histo-blood group antigens, inducing endocytosis of the viral particle. Acidification of the endosome induces conformational change of capsid protein thereby injecting virus genomic RNA into host cytoplasm. The sequence is that of Genome polyprotein from Oryctolagus cuniculus (Rabbit).